The primary structure comprises 407 residues: Protoasukamycin 4-monooxygenase (407 aa).

Does not interact with AsuE2, suggesting a possible transient interaction between the two enzymes instead of formation of a stable complex. The cofactor is FMN. FAD is required as a cofactor. Riboflavin serves as cofactor.

The enzyme catalyses protoasukamycin + NADH + O2 + H(+) = 4-hydroxyprotoasukamycin + NAD(+) + H2O. Its pathway is antibiotic biosynthesis. When flavin concentration is low, activity is enhanced by the presence of the NADH-dependent flavin reductase AsuE2. In the presence of abundant flavin, activity of AsuE1 is not affected by AsuE2. In terms of biological role, involved in the biosynthesis of the antibiotic asukamycin. Catalyzes the conversion of protoasukamycin to 4-hydroxyprotoasukamycin. Can also convert some protoasukamycin derivatives into their corresponding 4-hydroxyprotoasukamycin derivatives. Can also use NADPH, but catalytic efficiency is 50-fold higher with NADH. This Streptomyces nodosus subsp. asukaensis protein is Protoasukamycin 4-monooxygenase.